Reading from the N-terminus, the 265-residue chain is Cytochrome c oxidase subunit 3 (265 aa).

Transmembrane regions (helical) follow at residues 41–61, 85–105, 137–157, 162–182, 200–220, and 245–265; these read GGAR…FVWW, GFIL…WAFF, TLIL…ILAG, AVYA…FQGM, FFLA…FLII, and WHFV…WGGI.

Belongs to the cytochrome c oxidase subunit 3 family. As to quaternary structure, component of the cytochrome c oxidase (complex IV, CIV), a multisubunit enzyme composed of a catalytic core of 3 subunits and several supernumerary subunits. The complex exists as a monomer or a dimer and forms supercomplexes (SCs) in the inner mitochondrial membrane with ubiquinol-cytochrome c oxidoreductase (cytochrome b-c1 complex, complex III, CIII).

The protein resides in the mitochondrion inner membrane. The enzyme catalyses 4 Fe(II)-[cytochrome c] + O2 + 8 H(+)(in) = 4 Fe(III)-[cytochrome c] + 2 H2O + 4 H(+)(out). Its function is as follows. Component of the cytochrome c oxidase, the last enzyme in the mitochondrial electron transport chain which drives oxidative phosphorylation. The respiratory chain contains 3 multisubunit complexes succinate dehydrogenase (complex II, CII), ubiquinol-cytochrome c oxidoreductase (cytochrome b-c1 complex, complex III, CIII) and cytochrome c oxidase (complex IV, CIV), that cooperate to transfer electrons derived from NADH and succinate to molecular oxygen, creating an electrochemical gradient over the inner membrane that drives transmembrane transport and the ATP synthase. Cytochrome c oxidase is the component of the respiratory chain that catalyzes the reduction of oxygen to water. Electrons originating from reduced cytochrome c in the intermembrane space (IMS) are transferred via the dinuclear copper A center (CU(A)) of subunit 2 and heme A of subunit 1 to the active site in subunit 1, a binuclear center (BNC) formed by heme A3 and copper B (CU(B)). The BNC reduces molecular oxygen to 2 water molecules using 4 electrons from cytochrome c in the IMS and 4 protons from the mitochondrial matrix. This is Cytochrome c oxidase subunit 3 (COX3) from Arabidopsis thaliana (Mouse-ear cress).